The sequence spans 160 residues: Prorelaxin (160 aa).

Intrachain disulfides connect Cys10/Cys147, Cys22/Cys160, and Cys146/Cys151. Positions 34 to 133 are cleaved as a propeptide — connecting peptide; sequence QEKQRILGSG…KDFNLNIYSP (100 aa).

The protein belongs to the insulin family. In terms of assembly, heterodimer of a B chain and an A chain linked by two disulfide bonds. Expressed in the endometrium during pregnancy and in mammary gland during lactation.

It localises to the secreted. In terms of biological role, relaxin is an ovarian hormone that acts with estrogen to produce dilatation of the birth canal in many mammals. It bears mature young, and allows separation of the pelvic bones. This Cavia porcellus (Guinea pig) protein is Prorelaxin (RLN).